The sequence spans 249 residues: MASASGAMAKHEQILVLDPPTDLKFKGPFTDVVTTNLKLRNPSDRKVCFKVKTTAPRRYCVRPNSGIIDPGSTVTVSVMLQPFDYDPNEKSKHKFMVQTIFAPPNTSDMEAVWKEAKPDELMDSKLRCVFEMPNENDKLNDMEPSKAVPLNASKQDGPMPKPHSVSLNDTETRKLMEECKRLQGEMMKLSEENRHLRDEGLRLRKVAHSDKPGSTSTASFRDNVTSPLPSLLVVIAAIFIGFFLGKFIL.

Alanine 2 carries the N-acetylalanine modification. At 2–227 (ASASGAMAKH…ASFRDNVTSP (226 aa)) the chain is on the cytoplasmic side. Residues 14 to 131 (ILVLDPPTDL…MDSKLRCVFE (118 aa)) enclose the MSP domain. The tract at residues 50 to 53 (KVKT) is phosphorylated FFAT motif binding. At lysine 125 the chain carries N6-acetyllysine. Basic and acidic residues predominate over residues 135–144 (ENDKLNDMEP). The segment at 135–167 (ENDKLNDMEPSKAVPLNASKQDGPMPKPHSVSL) is disordered. Serine 166 bears the Phosphoserine mark. The stretch at 169–205 (DTETRKLMEECKRLQGEMMKLSEENRHLRDEGLRLRK) forms a coiled coil. A Phosphothreonine modification is found at threonine 170. 3 positions are modified to phosphoserine: serine 214, serine 216, and serine 219. The chain crosses the membrane as a helical; Anchor for type IV membrane protein span at residues 228-248 (LPSLLVVIAAIFIGFFLGKFI).

The protein belongs to the VAMP-associated protein (VAP) (TC 9.B.17) family. As to quaternary structure, homodimer; disulfide-linked. Heterodimer with VAPB. Interacts with VAMP1, VAMP2, STX1A, BET1, SEC22C and with the C-terminal domain of OCLN. Interacts (via MSP domain) with OSBPL1A (via FFAT motif). Interacts (via MSP domain) with ZFYVE27; may retain ZFYVE27 in the endoplasmic reticulum and regulate its function in cell projections formation. Interacts with OSBP. Interacts (via C-terminus) with RSAD2/viperin (via C-terminus). Interacts with IFITM3. Interacts with OSBPL3 (phosphorylated form). Interacts with KIF5A in a ZFYVE27-dependent manner. Interacts (via MSP domain) with STARD3 (via phosphorylated FFAT motif); this interaction recruits VAPA to the endosome. Interacts with STARD3NL (via FFAT motif). Interacts with CERT1. Interacts with PLEKHA3 and SACM1L to form a ternary complex. Interacts with VPS13A (via FFAT motif). Interacts with RB1CC1 (via phosphorylated FFAT motif), MIGA2 (via phosphorylated FFAT motif), RMDN3 (via phosphorylated FFAT motif), KCNB1 (via phosphorylated FFAT motif) and KCNB2 (via phosphorylated FFAT motif). Interacts (via MSP domain) with WDR44 (via FFAT-like motif); the interactions connect the endoplasmic reticulum (ER) with the endosomal tubule. (Microbial infection) Interacts with HCV protein NS5A and NS5B. Ubiquitous.

It localises to the endoplasmic reticulum membrane. It is found in the cell membrane. The protein localises to the cell junction. Its subcellular location is the tight junction. The protein resides in the nucleus membrane. Endoplasmic reticulum (ER)-anchored protein that mediates the formation of contact sites between the ER and endosomes via interaction with FFAT motif-containing proteins such as STARD3 or WDR44. STARD3-VAPA interaction enables cholesterol transfer from the ER to endosomes. Via interaction with WDR44 participates in neosynthesized protein export. In addition, recruited to the plasma membrane through OSBPL3 binding. The OSBPL3-VAPA complex stimulates RRAS signaling which in turn attenuates integrin beta-1 (ITGB1) activation at the cell surface. With OSBPL3, may regulate ER morphology. May play a role in vesicle trafficking. This chain is Vesicle-associated membrane protein-associated protein A, found in Homo sapiens (Human).